We begin with the raw amino-acid sequence, 472 residues long: Argininosuccinate lyase (472 aa).

It belongs to the lyase 1 family. Argininosuccinate lyase subfamily.

Its subcellular location is the cytoplasm. The catalysed reaction is 2-(N(omega)-L-arginino)succinate = fumarate + L-arginine. It functions in the pathway amino-acid biosynthesis; L-arginine biosynthesis; L-arginine from L-ornithine and carbamoyl phosphate: step 3/3. The sequence is that of Argininosuccinate lyase from Maricaulis maris (strain MCS10) (Caulobacter maris).